Consider the following 938-residue polypeptide: Myocardin (938 aa).

Positions 12–27 match the MEF2C-binding motif; that stretch reads IRSKFRSVLQLRLQQR. The RPEL 1 repeat unit spans residues 18–43; sequence SVLQLRLQQRRTQEQLANQGIIPPLK. Basic and acidic residues predominate over residues 48-61; that stretch reads FHEQRKHLDSDKAK. The interval 48–68 is disordered; sequence FHEQRKHLDSDKAKNSLKRKA. 2 RPEL repeats span residues 62 to 87 and 106 to 131; these read NSLKRKARNRCNSADLVNMHILQAST and DDLNEKIALRPGPLELVEKNILPVDS. The tract at residues 153 to 205 is HDAC5-binding; it reads FEEDSSSDGLSPDQTRSEDPQNSAGSPPDAKASDTPSTGSLGTNQDLASGSEN. Residues 154-281 are disordered; it reads EEDSSSDGLS…DQKAEKSPPP (128 aa). Polar residues-rich tracts occupy residues 159–177, 186–203, and 210–220; these read SDGLSPDQTRSEDPQNSAG, DTPSTGSLGTNQDLASGS, and SASQPSHQSDA. The span at 248-265 shows a compositional bias: basic residues; sequence NRHKKPKDPKPKVKKLKY. The region spanning 371–405 is the SAP domain; the sequence is LDDLKVSELRQQLRIRGLPVSGTKTALMDRLRPFQ. Serine 451, serine 455, serine 459, and serine 463 each carry phosphoserine; by GSK3-beta. Residues 516–561 are a coiled coil; that stretch reads EKDKMLVEKQKVINELTWKLQQEQRQVEELRMQLQKQKRNNCSEKK. A phosphoserine; by GSK3-beta mark is found at serine 626, serine 630, serine 634, and serine 638. Disordered stretches follow at residues 635–678 and 693–734; these read PQHS…SSPI and SDKV…MTRS. The span at 699 to 715 shows a compositional bias: low complexity; the sequence is KFSIPSPTFSKSSSAIS. Residues 717–938 are required for interaction with and ubiquitination by STUB1; the sequence is VTQPPSYEDA…SSMDLHLQQW (222 aa). Phosphoserine; by MAPK1 and MAPK3 is present on residues serine 815, serine 862, and serine 869. Threonine 896 carries the phosphothreonine; by MAPK1 and MAPK3 modification.

In terms of assembly, homodimer. Interacts with SRF, its association does not depend on specific DNA sequences for ternary complex formation. Interacts with MLLT7/FOXO4. Interacts (via C-terminal) with EP300 (via the CREB-binding domain). Interacts with HDAC4 and HDAC5. Interacts with MEF2C. Interacts (via C-terminus) with STUB1/CHIP. Interacts with PURB. In terms of processing, ubiquitinated; by STUB1/CHIP at the C-terminus, leading to its degradation by the proteasome. Phosphorylation by GSK3B is required for STUB1/CHIP-mediated ubiquitination. Post-translationally, phosphorylation negatively regulates the intrinsic myocardin transcriptional activity. Phosphorylated; by GSK3B. As to expression, expressed in the heart, aorta and bladder. Expressed in smooth muscle cell-containing tissues: stomach, small intestine, colon, lung, placenta and uterus. Very faint expression in prostate and skeletal muscle.

The protein resides in the nucleus. Smooth muscle cells (SM) and cardiac muscle cells-specific transcriptional factor which uses the canonical single or multiple CArG boxes DNA sequence. Acts as a cofactor of serum response factor (SRF) with the potential to modulate SRF-target genes. Plays a crucial role in cardiogenesis, urinary bladder development, and differentiation of the smooth muscle cell lineage (myogenesis). Positively regulates the transcription of genes involved in vascular smooth muscle contraction. The chain is Myocardin (MYOCD) from Homo sapiens (Human).